The primary structure comprises 114 residues: Protein ORF3 (114 aa).

2 hydrophobic regions span residues 6 to 22 (CALG…CLCC) and 33 to 53 (AVVG…GLIL). An interaction with host HPX region spans residues 28 to 68 (VSRLAAVVGGAAAVPAVVSGVTGLILSPSQSPIFIQPTPLP). The tract at residues 72–114 (PLRPGLDLAFANQPGHLAPLGEIRPSAPPLPPVADLPQPGLRR) is homodimerization, and interaction with host AMBP/bikunin. The interval 91 to 114 (LGEIRPSAPPLPPVADLPQPGLRR) is disordered. An interaction with host SRC, HCK, FYN, PIK3R3 and GRB2 region spans residues 95 to 104 (RPSAPPLPPV). Positions 96-99 (PSAP) match the PTAP/PSAP motif motif.

Belongs to the hepevirus ORF3 protein family. In terms of assembly, forms homooligomers. Interacts with host SRC, HCK, FYN, PIK3R3 and GRB2 (via SH3 domain); binding does not activate the kinases. Interacts with host AMBP/bikunin and AMBP/alpha-1-microglobulin peptides. Interacts with host HPX/hemopexin. Interacts (when phosphorylated) with capsid protein ORF2. Interacts with host TSG101; this interaction plays a role in viral release from the host cell. Interacts with host SIRPA; this interaction down-regulates the phosphorylation of host IRF3. Post-translationally, palmitoylated in the N-terminus.

It localises to the host endoplasmic reticulum membrane. The protein localises to the host cytoplasm. Its subcellular location is the host cytoskeleton. The protein resides in the virion. It is found in the host cell membrane. Small multifunctional phosphoprotein involved in virion morphogenesis, egress and counteracting host innate immunity. Plays critical roles in the final steps of viral release by interacting with host TSG101, a member of the vacuolar protein-sorting pathway and using other cellular host proteins involved in vesicle formation pathway. Also acts as a viroporin and forms ion conductive pores allowing viral particle release. Impairs the generation of type I interferon by down-regulating host TLR3 and TLR7 as well as their downstream signaling pathways. Down-regulates the phosphorylation of host IRF3 via the interaction with host SIRP-alpha, thereby inhibiting IFN-I expression. Interacts with host microtubules. This is Protein ORF3 from Hepatitis E virus genotype 2 (isolate Human/Mexico) (HEV-2).